The following is a 692-amino-acid chain: Elongation factor G 2 (692 aa).

The region spanning 8 to 283 (KDVRNIGIMA…GVVNYLPSPL (276 aa)) is the tr-type G domain. Residues 17 to 24 (AHIDAGKT), 81 to 85 (DTPGH), and 135 to 138 (NKMD) each bind GTP.

It belongs to the TRAFAC class translation factor GTPase superfamily. Classic translation factor GTPase family. EF-G/EF-2 subfamily.

The protein localises to the cytoplasm. Functionally, catalyzes the GTP-dependent ribosomal translocation step during translation elongation. During this step, the ribosome changes from the pre-translocational (PRE) to the post-translocational (POST) state as the newly formed A-site-bound peptidyl-tRNA and P-site-bound deacylated tRNA move to the P and E sites, respectively. Catalyzes the coordinated movement of the two tRNA molecules, the mRNA and conformational changes in the ribosome. This is Elongation factor G 2 from Desulfotalea psychrophila (strain LSv54 / DSM 12343).